Here is a 146-residue protein sequence, read N- to C-terminus: Calmodulin-like protein 5 (146 aa).

N-acetylalanine is present on A2. 4 EF-hand domains span residues 8–43 (EEEA…TGKN), 44–74 (LSEA…TAAK), 78–113 (AGLE…LGQP), and 114–146 (LPQE…LAQE). Residues D21, D23, N25, T27, E32, D57, D59, D61, E63, E68, D91, D93, D95, H97, E102, D127, D129, D131, R133, and E138 each coordinate Ca(2+).

As to quaternary structure, associates with transglutaminase 3. As to expression, particularly abundant in the epidermis where its expression is directly related to keratinocyte differentiation. Very low expression in lung.

Its function is as follows. Binds calcium. May be involved in terminal differentiation of keratinocytes. The sequence is that of Calmodulin-like protein 5 (CALML5) from Homo sapiens (Human).